The primary structure comprises 426 residues: Enolase (426 aa).

Gln-162 is a binding site for (2R)-2-phosphoglycerate. Glu-204 (proton donor) is an active-site residue. Residues Asp-241, Glu-286, and Asp-313 each contribute to the Mg(2+) site. (2R)-2-phosphoglycerate-binding residues include Lys-338, Arg-367, Ser-368, and Lys-389. The active-site Proton acceptor is Lys-338.

It belongs to the enolase family. The cofactor is Mg(2+).

The protein resides in the cytoplasm. It is found in the secreted. Its subcellular location is the cell surface. The enzyme catalyses (2R)-2-phosphoglycerate = phosphoenolpyruvate + H2O. The protein operates within carbohydrate degradation; glycolysis; pyruvate from D-glyceraldehyde 3-phosphate: step 4/5. Catalyzes the reversible conversion of 2-phosphoglycerate (2-PG) into phosphoenolpyruvate (PEP). It is essential for the degradation of carbohydrates via glycolysis. This is Enolase from Aliarcobacter butzleri (strain RM4018) (Arcobacter butzleri).